The sequence spans 760 residues: DNA replication licensing factor mcm7 (760 aa).

One can recognise an MCM domain in the interval 353-559 (VYEKLAKSIA…ETDEHLAQHV (207 aa)). 8 residues coordinate ATP: Y366, G406, A408, K409, S410, N511, R536, and R630. The short motif at 535–538 (SRFD) is the Arginine finger element.

This sequence belongs to the MCM family. As to quaternary structure, component of the mcm2-7 complex. The complex forms a toroidal hexameric ring with the proposed subunit order mcm2-mcm6-mcm4-mcm7-mcm3-mcm5. The heterodimers of mcm4/mcm6 and mcm3/mcm5 interact with mcm2 and mcm7. Interacts with sld3 and mcm10.

The protein localises to the nucleus. It carries out the reaction ATP + H2O = ADP + phosphate + H(+). In terms of biological role, acts as a component of the MCM2-7 complex (MCM complex) which is the replicative helicase essential for 'once per cell cycle' DNA replication initiation and elongation in eukaryotic cells. Core component of CDC45-MCM-GINS (CMG) helicase, the molecular machine that unwinds template DNA during replication, and around which the replisome is built. The active ATPase sites in the MCM2-7 ring are formed through the interaction surfaces of two neighboring subunits such that a critical structure of a conserved arginine finger motif is provided in trans relative to the ATP-binding site of the Walker A box of the adjacent subunit. The six ATPase active sites, however, are likely to contribute differentially to the complex helicase activity. Required for the progression of S phase. In Schizosaccharomyces pombe (strain 972 / ATCC 24843) (Fission yeast), this protein is DNA replication licensing factor mcm7 (mcm7).